The sequence spans 202 residues: Alpha-latrotoxin-Lm1a (202 aa).

10 ANK repeats span residues 95-109 (LYNA…VGFK), 110-120 (LMESPEININE), 122-132 (NDWPVASTLLR), 133-138 (SSNVNV), 142-161 (NSDT…DINT), 163-170 (NGHLNIVK), 171-182 (YLVEEEDLSVDG), Lys-184, 185-191 (YGIDMTI), and 193-202 (TALDIATDLK). The 4C4.1 epitope stretch occupies residues 175–181 (EEDLSVD).

The protein belongs to the cationic peptide 01 (latrotoxin) family. 03 (alpha-latrotoxin) subfamily. As to quaternary structure, homotetramer in membranes. Processed by furin-like proteases at both the N- and C-termini. Post-translationally, contains 1 disulfide bond. In terms of tissue distribution, expressed in venom gland, cephalothorax, and abdomen tissues from both males and females.

The protein localises to the secreted. The protein resides in the target cell membrane. In terms of biological role, presynaptic neurotoxin that causes massive release of neurotransmitters from vertebrate (but not invertebrate) nerve terminals and endocrine cells via a complex mechanism involving activation of receptor(s) and toxin insertion into the plasma membrane with subsequent pore formation. Binds to neurexin-1-alpha (NRXN1) in a calcium dependent manner, adhesion G protein-coupled receptor L1 (ADGRL1, also termed latrophilin-1 and calcium-independent receptor of latrotoxin (CIRL)), and receptor-type tyrosine-protein phosphatase S (PTPRS), also termed PTP sigma. NRXN1 and PTPRS are suggested to provide a platform for binding and subsequent pore formation events. In contrast, binding to ADGRL1 does not involve oligomerization and channel formation, but direct downstream stimulation of the synaptic fusion machinery. In Latrodectus mactans (Black widow spider), this protein is Alpha-latrotoxin-Lm1a.